The primary structure comprises 342 residues: Phenylalanine--tRNA ligase alpha subunit (342 aa).

A Mg(2+)-binding site is contributed by Glu257.

This sequence belongs to the class-II aminoacyl-tRNA synthetase family. Phe-tRNA synthetase alpha subunit type 1 subfamily. As to quaternary structure, tetramer of two alpha and two beta subunits. Mg(2+) serves as cofactor.

The protein resides in the cytoplasm. It catalyses the reaction tRNA(Phe) + L-phenylalanine + ATP = L-phenylalanyl-tRNA(Phe) + AMP + diphosphate + H(+). The polypeptide is Phenylalanine--tRNA ligase alpha subunit (Chlamydia trachomatis serovar A (strain ATCC VR-571B / DSM 19440 / HAR-13)).